Reading from the N-terminus, the 233-residue chain is Glycerol-3-phosphate acyltransferase (233 aa).

The next 5 helical transmembrane spans lie at Trp7 to Ile27, Ile94 to Phe114, Val127 to Phe147, Ser153 to Ile173, and Ile185 to Ile205.

The protein belongs to the PlsY family. As to quaternary structure, probably interacts with PlsX.

It localises to the cell membrane. The enzyme catalyses an acyl phosphate + sn-glycerol 3-phosphate = a 1-acyl-sn-glycero-3-phosphate + phosphate. The protein operates within lipid metabolism; phospholipid metabolism. Catalyzes the transfer of an acyl group from acyl-phosphate (acyl-PO(4)) to glycerol-3-phosphate (G3P) to form lysophosphatidic acid (LPA). This enzyme utilizes acyl-phosphate as fatty acyl donor, but not acyl-CoA or acyl-ACP. The sequence is that of Glycerol-3-phosphate acyltransferase from Acholeplasma laidlawii.